We begin with the raw amino-acid sequence, 252 residues long: Probable transcriptional regulatory protein Caur_1043 (252 aa).

Basic residues predominate over residues 1 to 14; the sequence is MSGHSKWHTIRRTK. The tract at residues 1 to 22 is disordered; it reads MSGHSKWHTIRRTKGVNDQRRG.

The protein belongs to the TACO1 family.

The protein resides in the cytoplasm. The sequence is that of Probable transcriptional regulatory protein Caur_1043 from Chloroflexus aurantiacus (strain ATCC 29366 / DSM 635 / J-10-fl).